Here is a 551-residue protein sequence, read N- to C-terminus: Scaffold protein OPG125 (551 aa).

It belongs to the orthopoxvirus protein OPG125 family. As to quaternary structure, homotrimer. Self-assembles to form a layer. Interacts with OPG158 (via N-terminus); this interaction is necessary for OPG125 association with membranes.

The protein localises to the membrane. Scaffold protein which forms a transitory spherical honeycomb lattice providing curvature and rigidity to the convex membrane of crescent and immature virions (IV). This association occurs concomitantly with viral membrane formation. Targeted by the drug rifampicin, which prevents the formation of this lattice, and hence virus morphogenesis. In the presence of rifampicin, irregularly shaped membranes that lack the honeycomb layer accumulate around areas of electron-dense viroplasm. This layer is lost from virions during maturation from IV to mature virion (MV), through the proteolysis of OPG158 N-terminus. The protein is Scaffold protein OPG125 (OPG125) of Vaccinia virus (strain Ankara) (VACV).